Here is an 82-residue protein sequence, read N- to C-terminus: Conotoxin Cal30 (82 aa).

Residues 1–19 form the signal peptide; the sequence is MEKLIILLLVASLLVTTDS.

In terms of processing, may contain 5 disulfide bonds. Expressed by the venom duct.

It localises to the secreted. In terms of biological role, probable neurotoxin. This is Conotoxin Cal30 from Californiconus californicus (California cone).